A 381-amino-acid polypeptide reads, in one-letter code: Alcohol dehydrogenase class-3 (381 aa).

Cys-49 is a binding site for Zn(2+). Position 50 (His-50) interacts with NAD(+). An alcohol contacts are provided by Thr-51 and His-71. His-71, Glu-72, Cys-101, Cys-104, Cys-107, Cys-115, and Cys-179 together coordinate Zn(2+). NAD(+)-binding positions include 204 to 209 (GLGTVG), Asp-228, Lys-233, Ile-274, 297 to 299 (VGV), 322 to 324 (TAF), and Arg-374.

This sequence belongs to the zinc-containing alcohol dehydrogenase family. Class-III subfamily. Homodimer. Requires Zn(2+) as cofactor.

The protein resides in the cytoplasm. It carries out the reaction a primary alcohol + NAD(+) = an aldehyde + NADH + H(+). The enzyme catalyses a secondary alcohol + NAD(+) = a ketone + NADH + H(+). The catalysed reaction is S-(hydroxymethyl)glutathione + NADP(+) = S-formylglutathione + NADPH + H(+). It catalyses the reaction S-(hydroxymethyl)glutathione + NAD(+) = S-formylglutathione + NADH + H(+). The protein is Alcohol dehydrogenase class-3 of Oryza sativa subsp. japonica (Rice).